The primary structure comprises 209 residues: Adenylate kinase (209 aa).

Residue 59–64 coordinates ATP; sequence GSGKRT. Residues 79–108 form an NMP region; that stretch reads SSGQVLTRGVESGSETSQLAHSYVSRGERV. Residues S80, 106 to 108, 135 to 138, and Q142 each bind AMP; these read ERV and GYPR. Residues 172 to 205 are LID; sequence HRRYDPATNKXYHMLDNPPPGGRCRVMRTAPAEG. R173 contributes to the ATP binding site.

The protein belongs to the adenylate kinase family. As to quaternary structure, monomer.

The protein localises to the cytoplasm. It catalyses the reaction AMP + ATP = 2 ADP. Its function is as follows. Catalyzes the reversible transfer of the terminal phosphate group between ATP and AMP. Plays an important role in cellular energy homeostasis and in adenine nucleotide metabolism. The polypeptide is Adenylate kinase (Trypanosoma brucei rhodesiense).